The sequence spans 463 residues: uncharacterized protein (463 aa).

In terms of domain architecture, TRAM spans 12-70; that stretch reads LWQQGSVVELTITGLNHQGEGIGRFNERVVFVPDTAPGDRLEVRLVKVKRNYALAQLLK. [4Fe-4S] cluster is bound by residues C83, C89, C92, and C171. 4 residues coordinate S-adenosyl-L-methionine: Q295, Y324, E345, and D390. C417 serves as the catalytic Nucleophile.

Belongs to the class I-like SAM-binding methyltransferase superfamily. RNA M5U methyltransferase family.

This is an uncharacterized protein from Synechocystis sp. (strain ATCC 27184 / PCC 6803 / Kazusa).